Here is a 228-residue protein sequence, read N- to C-terminus: tRNA (carboxymethyluridine(34)-5-O)-methyltransferase (228 aa).

It is found in the cytoplasm. The protein resides in the nucleus. It carries out the reaction 5-(carboxymethyl)uridine(34) in tRNA + S-adenosyl-L-methionine = 5-(2-methoxy-2-oxoethyl)uridine(34) in tRNA + S-adenosyl-L-homocysteine. Its function is as follows. Required for the methylation of the wobble bases at position 34 in tRNA. Appears to have a role in stress-response. The sequence is that of tRNA (carboxymethyluridine(34)-5-O)-methyltransferase (trm9) from Schizosaccharomyces pombe (strain 972 / ATCC 24843) (Fission yeast).